The primary structure comprises 116 residues: MAGRKSSTPTRHKMHVKTGDTVQVISGRDKGKVGEVIKTLPKSSKVVVKDVNIRTKHVKPQQEGESGQIQTFEAPIHSSNVMHYSEKEKVASRIGYQLTEDGRKVRVLKKTGEVID.

Residues 1 to 27 (MAGRKSSTPTRHKMHVKTGDTVQVISG) form a disordered region.

Belongs to the universal ribosomal protein uL24 family. Part of the 50S ribosomal subunit.

Functionally, one of two assembly initiator proteins, it binds directly to the 5'-end of the 23S rRNA, where it nucleates assembly of the 50S subunit. One of the proteins that surrounds the polypeptide exit tunnel on the outside of the subunit. The sequence is that of Large ribosomal subunit protein uL24 from Picosynechococcus sp. (strain ATCC 27264 / PCC 7002 / PR-6) (Agmenellum quadruplicatum).